A 293-amino-acid chain; its full sequence is Elongation factor Ts (293 aa).

Positions 80-83 (TDFV) are involved in Mg(2+) ion dislocation from EF-Tu.

This sequence belongs to the EF-Ts family.

Its subcellular location is the cytoplasm. In terms of biological role, associates with the EF-Tu.GDP complex and induces the exchange of GDP to GTP. It remains bound to the aminoacyl-tRNA.EF-Tu.GTP complex up to the GTP hydrolysis stage on the ribosome. The protein is Elongation factor Ts of Burkholderia thailandensis (strain ATCC 700388 / DSM 13276 / CCUG 48851 / CIP 106301 / E264).